The sequence spans 394 residues: Aspergillopepsin-1 (394 aa).

The signal sequence occupies residues 1 to 20 (MVVFSKTAALVLGLSTAVSA). Residues 21–69 (APAPTRKGFTINQIARPANKTRTVNLPGLYARSLAKFGGTVPQSVKEAA) constitute a propeptide, activation peptide. The Peptidase A1 domain maps to 85–391 (YLTPVTVGKS…NSEGPKLGFA (307 aa)). Residues D101 and D283 contribute to the active site. Residues C319 and C354 are joined by a disulfide bond.

This sequence belongs to the peptidase A1 family.

Its subcellular location is the secreted. It catalyses the reaction Hydrolysis of proteins with broad specificity. Generally favors hydrophobic residues in P1 and P1', but also accepts Lys in P1, which leads to activation of trypsinogen. Does not clot milk.. Functionally, secreted aspartic endopeptidase that allows assimilation of proteinaceous substrates. The scissile peptide bond is attacked by a nucleophilic water molecule activated by two aspartic residues in the active site. Shows a broad primary substrate specificity. Favors hydrophobic residues at the P1 and P1' positions, but also accepts a lysine residue in the P1 position, leading to the activation of trypsinogen and chymotrypsinogen A. This is Aspergillopepsin-1 from Aspergillus niger.